Consider the following 488-residue polypeptide: Proline--tRNA ligase (488 aa).

It belongs to the class-II aminoacyl-tRNA synthetase family. ProS type 3 subfamily. As to quaternary structure, homodimer.

It is found in the cytoplasm. The catalysed reaction is tRNA(Pro) + L-proline + ATP = L-prolyl-tRNA(Pro) + AMP + diphosphate. In terms of biological role, catalyzes the attachment of proline to tRNA(Pro) in a two-step reaction: proline is first activated by ATP to form Pro-AMP and then transferred to the acceptor end of tRNA(Pro). The sequence is that of Proline--tRNA ligase from Borreliella afzelii (strain PKo) (Borrelia afzelii).